The following is a 297-amino-acid chain: HTH-type transcriptional regulator ArgP (297 aa).

Positions 4 to 60 (PDYRTLQALDAVIRERGFERAAQKLCITQSAVSQRIKQLENMFGQPLLVRTVPPRPT) constitute an HTH lysR-type domain. The segment at residues 21-40 (FERAAQKLCITQSAVSQRIK) is a DNA-binding region (H-T-H motif).

Belongs to the LysR transcriptional regulatory family. Homodimer.

In terms of biological role, controls the transcription of genes involved in arginine and lysine metabolism. The sequence is that of HTH-type transcriptional regulator ArgP from Escherichia coli O127:H6 (strain E2348/69 / EPEC).